The chain runs to 289 residues: Probable 2-keto-3-deoxyxylonate dehydratase (289 aa).

Glu-144, Glu-146, and Asp-164 together coordinate Mg(2+).

It belongs to the FAH family.

It catalyses the reaction 2-dehydro-3-deoxy-D-arabinonate = 2,5-dioxopentanoate + H2O. It participates in carbohydrate metabolism; D-xylose degradation. Functionally, probable 2-keto-3-deoxyxylonate dehydratase involved in the degradation of D-xylose, a major component of hemicelluloses such as xylan. Catalyzes the fourth reaction in the xylose utilization pathway through dehydratation of 2-dehydro-3-deoxy-D-xylonate into alpha-ketoglutarate semialdehyde (2,5-dioxopentanoate). The chain is Probable 2-keto-3-deoxyxylonate dehydratase from Haloferax volcanii (strain ATCC 29605 / DSM 3757 / JCM 8879 / NBRC 14742 / NCIMB 2012 / VKM B-1768 / DS2) (Halobacterium volcanii).